Here is a 469-residue protein sequence, read N- to C-terminus: Mitochondrial-processing peptidase subunit beta (469 aa).

Histidine 78 contacts Zn(2+). The active-site Proton acceptor is the glutamate 81. Positions 82 and 159 each coordinate Zn(2+).

The protein belongs to the peptidase M16 family. Heterodimer of alpha and beta subunits, forming the mitochondrial processing protease (MPP) in which subunit alpha is involved in substrate recognition and binding and subunit beta is the catalytic subunit. mppB is probably also part of the cytochrome bc1 complex as a core I protein in the mitochondrial inner membrane. It depends on Zn(2+) as a cofactor.

Its subcellular location is the mitochondrion inner membrane. It localises to the mitochondrion matrix. It catalyses the reaction Release of N-terminal transit peptides from precursor proteins imported into the mitochondrion, typically with Arg in position P2.. Its activity is regulated as follows. Binding to alpha subunit is required for catalytic activity. Functionally, catalytic subunit of the essential mitochondrial processing protease (MPP), which cleaves the mitochondrial sequence off newly imported precursors proteins. Preferentially, cleaves after an arginine at position P2. Plays an essential role in mitochondrial biogenesis. This chain is Mitochondrial-processing peptidase subunit beta (mppB), found in Dictyostelium discoideum (Social amoeba).